A 212-amino-acid polypeptide reads, in one-letter code: ATP synthase F(0) complex subunit a (212 aa).

A run of 6 helical transmembrane segments spans residues 3-23, 58-78, 87-107, 128-148, 154-174, and 179-199; these read MMGIPLILIAIILPMLLMFTS, WAAMLITLMIFLLSMNMLGLL, QLSMNMALAAPLWLATVLTGL, IPLLIIIETVSLFIRPLALGV, LTAGHLLIQLISTAAFVLMPT, and ALSTLIVLMLLTGLEIAVAMI.

This sequence belongs to the ATPase A chain family. In terms of assembly, component of the ATP synthase complex composed at least of ATP5F1A/subunit alpha, ATP5F1B/subunit beta, ATP5MC1/subunit c (homooctomer), MT-ATP6/subunit a, MT-ATP8/subunit 8, ATP5ME/subunit e, ATP5MF/subunit f, ATP5MG/subunit g, ATP5MK/subunit k, ATP5MJ/subunit j, ATP5F1C/subunit gamma, ATP5F1D/subunit delta, ATP5F1E/subunit epsilon, ATP5PF/subunit F6, ATP5PB/subunit b, ATP5PD/subunit d, ATP5PO/subunit OSCP. ATP synthase complex consists of a soluble F(1) head domain (subunits alpha(3) and beta(3)) - the catalytic core - and a membrane F(0) domain - the membrane proton channel (subunits c, a, 8, e, f, g, k and j). These two domains are linked by a central stalk (subunits gamma, delta, and epsilon) rotating inside the F1 region and a stationary peripheral stalk (subunits F6, b, d, and OSCP). Interacts with DNAJC30; interaction is direct.

It localises to the mitochondrion inner membrane. The enzyme catalyses H(+)(in) = H(+)(out). Functionally, subunit a, of the mitochondrial membrane ATP synthase complex (F(1)F(0) ATP synthase or Complex V) that produces ATP from ADP in the presence of a proton gradient across the membrane which is generated by electron transport complexes of the respiratory chain. ATP synthase complex consist of a soluble F(1) head domain - the catalytic core - and a membrane F(1) domain - the membrane proton channel. These two domains are linked by a central stalk rotating inside the F(1) region and a stationary peripheral stalk. During catalysis, ATP synthesis in the catalytic domain of F(1) is coupled via a rotary mechanism of the central stalk subunits to proton translocation. With the subunit c (ATP5MC1), forms the proton-conducting channel in the F(0) domain, that contains two crucial half-channels (inlet and outlet) that facilitate proton movement from the mitochondrial intermembrane space (IMS) into the matrix. Protons are taken up via the inlet half-channel and released through the outlet half-channel, following a Grotthuss mechanism. This Tropidurus montanus (Lizard) protein is ATP synthase F(0) complex subunit a.